A 114-amino-acid polypeptide reads, in one-letter code: Large ribosomal subunit protein bL20c (114 aa).

The protein belongs to the bacterial ribosomal protein bL20 family.

It is found in the plastid. In terms of biological role, binds directly to 23S ribosomal RNA and is necessary for the in vitro assembly process of the 50S ribosomal subunit. It is not involved in the protein synthesizing functions of that subunit. This chain is Large ribosomal subunit protein bL20c, found in Prototheca wickerhamii.